A 377-amino-acid chain; its full sequence is E3 ubiquitin-protein ligase rififylin (377 aa).

The FYVE-type zinc-finger motif lies at 55–107; sequence TGSEPSCKACGVHFASTTRKQTCLDCKKNFCMTCSSQEGNGPRLCLLCLRFRA. Residues 115–134 enclose the SAP 1 domain; sequence LMKMKVKDLRDYLSLHDIST. The tract at residues 176–249 is disordered; the sequence is LTQPQTSTVP…SVDSEDSFVP (74 aa). A compositionally biased stretch (polar residues) spans 190-212; sequence GLPSSPAQVTSVPLAQDQETQQA. Acidic residues predominate over residues 235–245; it reads EDETQSVDSED. Residues Ser240, Ser243, Ser246, and Ser254 each carry the phosphoserine modification. Residues 264–278 form the SAP 2 domain; the sequence is IEGLTVRQLKEILAR. The RING-type zinc-finger motif lies at 330–365; it reads CKICMDSPIDCVLLECGHMVTCTKCGKRMNECPICR.

Interacts with CASP8 and CASP10. Interacts with RIPK1 (via protein kinase domain); involved in RIPK1 ubiquitination. Interacts with PRR5L. Interacts (via RING-type zinc finger) with p53/TP53; involved in p53/TP53 ubiquitination. Interacts (via RING-type zinc finger) with MDM2; the interaction stabilizes MDM2. In terms of processing, autoubiquitinated. Palmitoylated. Post-translationally, undergoes caspase-mediated cleavage upon death-receptor activation, by TNFSF10 for instance. May be mediated by the caspases CASP8 and CASP10 in a negative feedback loop. In terms of tissue distribution, ubiquitous. Detected in heart, brain, spleen, lung, liver, skeletal muscle, kidney, testis, thymus, whole embryo and embryonic stem cells.

It is found in the cytoplasm. It localises to the cytosol. Its subcellular location is the cell membrane. The protein localises to the recycling endosome membrane. The catalysed reaction is S-ubiquitinyl-[E2 ubiquitin-conjugating enzyme]-L-cysteine + [acceptor protein]-L-lysine = [E2 ubiquitin-conjugating enzyme]-L-cysteine + N(6)-ubiquitinyl-[acceptor protein]-L-lysine.. Its pathway is protein modification; protein ubiquitination. Its function is as follows. E3 ubiquitin-protein ligase that regulates several biological processes through the ubiquitin-mediated proteasomal degradation of various target proteins. Mediates 'Lys-48'-linked polyubiquitination of PRR5L and its subsequent proteasomal degradation thereby indirectly regulating cell migration through the mTORC2 complex. Also ubiquitinates the caspases CASP8 and CASP10, promoting their proteasomal degradation, to negatively regulate apoptosis downstream of death domain receptors. Also negatively regulates the tumor necrosis factor-mediated signaling pathway through targeting of RIPK1 to ubiquitin-mediated proteasomal degradation. Negatively regulates p53/TP53 through its direct ubiquitination and targeting to proteasomal degradation. Indirectly, may also negatively regulate p53/TP53 through ubiquitination and degradation of SFN. May also play a role in endocytic recycling. The protein is E3 ubiquitin-protein ligase rififylin of Mus musculus (Mouse).